Reading from the N-terminus, the 193-residue chain is tRNA (cytidine(56)-2'-O)-methyltransferase (193 aa).

S-adenosyl-L-methionine-binding positions include L86 and 115–119 (GGEKV).

It belongs to the aTrm56 family. As to quaternary structure, homodimer.

It is found in the cytoplasm. The catalysed reaction is cytidine(56) in tRNA + S-adenosyl-L-methionine = 2'-O-methylcytidine(56) in tRNA + S-adenosyl-L-homocysteine + H(+). Its function is as follows. Specifically catalyzes the AdoMet-dependent 2'-O-ribose methylation of cytidine at position 56 in tRNAs. This chain is tRNA (cytidine(56)-2'-O)-methyltransferase, found in Haloquadratum walsbyi (strain DSM 16790 / HBSQ001).